The primary structure comprises 663 residues: Methionine--tRNA ligase (663 aa).

A 'HIGH' region motif is present at residues 13 to 23 (PYTNGPCHLGH). 4 residues coordinate Zn(2+): C144, C147, C156, and C160. Residues 326–330 (KFSKS) carry the 'KMSKS' region motif. K329 provides a ligand contact to ATP. Positions 565–663 (EFGKMKLIVG…QAVEPGTPIR (99 aa)) constitute a tRNA-binding domain.

It belongs to the class-I aminoacyl-tRNA synthetase family. MetG type 1 subfamily. As to quaternary structure, homodimer. It depends on Zn(2+) as a cofactor.

It is found in the cytoplasm. It catalyses the reaction tRNA(Met) + L-methionine + ATP = L-methionyl-tRNA(Met) + AMP + diphosphate. Is required not only for elongation of protein synthesis but also for the initiation of all mRNA translation through initiator tRNA(fMet) aminoacylation. The sequence is that of Methionine--tRNA ligase from Methanosphaerula palustris (strain ATCC BAA-1556 / DSM 19958 / E1-9c).